Consider the following 567-residue polypeptide: MDIQRIVLFAGLAIVSYLMVLAWNEDYHQPQTEQVAEAQSSSDSSATNSTDDMILPEDNNAGGEEFATPETGSLASTSANSDQDLADRFITVTTDVYELKIDRVGGNVVDSSLLQYDESLDSEQPLKLLTNTSTRTYLLESGLIGRDGPDGSQAGEAPVFQAETGSYQLAEGEDELTINLVYTTDSGVAITKRYHLARNSYQIDVSYLIDNRSESPWQGNFTGKIVRDQAPDPTSQASMGIRAYLGMVISTPEDPYEKYDFEDLSEKRVNQSVTNGWLAFLQHYFLTAWIPERDQKAQFQTTRRGDLHVMGFVYPATTVAPGETAEVGATAYVGPKIIDRLEALAPNLDRTVDFGWLFFISLPLFYILEWFYGLVGNWGVAIILLTVLVKAVFFHLSATSYRSMAKMRAVAPQLTRLKELYGDDRQRMSQEMMALYKREKINPLGGCLPILVQMPVFISLYWVLFESVQLRHAPFMLWIQDLSQMDPYFILPILMGASMFIQMSLNPTPPDPMQAKIMKLMPLIFTVFFLWFPAGLVLYWLVNNILSISQQWYITRKIEAETAGKKY.

Residues 3–23 (IQRIVLFAGLAIVSYLMVLAW) traverse the membrane as a helical segment. The interval 32 to 80 (TEQVAEAQSSSDSSATNSTDDMILPEDNNAGGEEFATPETGSLASTSAN) is disordered. Residues 40–52 (SSSDSSATNSTDD) are compositionally biased toward low complexity. Residues 70–80 (ETGSLASTSAN) are compositionally biased toward polar residues. Helical transmembrane passes span 354–374 (FGWLFFISLPLFYILEWFYGL), 378–398 (WGVAIILLTVLVKAVFFHLSA), 445–465 (GGCLPILVQMPVFISLYWVLF), 485–505 (MDPYFILPILMGASMFIQMSL), and 522–542 (PLIFTVFFLWFPAGLVLYWLV).

Belongs to the OXA1/ALB3/YidC family. Type 1 subfamily. As to quaternary structure, interacts with the Sec translocase complex via SecD. Specifically interacts with transmembrane segments of nascent integral membrane proteins during membrane integration.

It is found in the cell inner membrane. Its function is as follows. Required for the insertion and/or proper folding and/or complex formation of integral membrane proteins into the membrane. Involved in integration of membrane proteins that insert both dependently and independently of the Sec translocase complex, as well as at least some lipoproteins. Aids folding of multispanning membrane proteins. This is Membrane protein insertase YidC from Marinobacter nauticus (strain ATCC 700491 / DSM 11845 / VT8) (Marinobacter aquaeolei).